Here is a 1000-residue protein sequence, read N- to C-terminus: Probable coatomer subunit beta' (1000 aa).

WD repeat units lie at residues 13–52 (ARSD…LVKS), 55–94 (VCDV…RVHQ), 97–136 (AHSD…AMKQ), 140–180 (GHTH…PNFT), 183–224 (GHEK…CVQT), 227–266 (GHAQ…LETT), and 351–391 (LGSS…NKDF). Residues 863–1000 (PRQTETQLKA…MDDLNLDEED (138 aa)) form a disordered region. Acidic residues predominate over residues 901–915 (EPEEEEEQEEFDDDQ). The span at 960-969 (SASSQQSAQD) shows a compositional bias: low complexity. Positions 970–1000 (FQDDTQWSDEDFGDAENGDLNMDDLNLDEED) are enriched in acidic residues.

It belongs to the WD repeat COPB2 family. In terms of assembly, oligomeric complex that consists of at least the alpha, beta, beta', gamma, delta, epsilon and zeta subunits.

The protein resides in the cytoplasm. It is found in the golgi apparatus membrane. The protein localises to the cytoplasmic vesicle. It localises to the COPI-coated vesicle membrane. The coatomer is a cytosolic protein complex that binds to dilysine motifs and reversibly associates with Golgi non-clathrin-coated vesicles, which further mediate biosynthetic protein transport from the ER, via the Golgi up to the trans Golgi network. Coatomer complex is required for budding from Golgi membranes, and is essential for the retrograde Golgi-to-ER transport of dilysine-tagged proteins. The sequence is that of Probable coatomer subunit beta' (copb-2) from Caenorhabditis elegans.